Here is a 112-residue protein sequence, read N- to C-terminus: MNITTQDKFEEMEIEKTLGLVRGSTIRTKNIGYDLIASLRTIVGGEIPEYTKMMDESREEALKRMYREAQRRGADAVVGVRFETSSILAGSAEFLCYGTAVKLKNNIQLNFK.

It belongs to the UPF0145 family.

This Methanococcus maripaludis (strain C6 / ATCC BAA-1332) protein is UPF0145 protein MmarC6_1828.